A 296-amino-acid polypeptide reads, in one-letter code: Glycine--tRNA ligase alpha subunit (296 aa).

This sequence belongs to the class-II aminoacyl-tRNA synthetase family. Tetramer of two alpha and two beta subunits.

The protein resides in the cytoplasm. It carries out the reaction tRNA(Gly) + glycine + ATP = glycyl-tRNA(Gly) + AMP + diphosphate. The protein is Glycine--tRNA ligase alpha subunit of Listeria welshimeri serovar 6b (strain ATCC 35897 / DSM 20650 / CCUG 15529 / CIP 8149 / NCTC 11857 / SLCC 5334 / V8).